Reading from the N-terminus, the 193-residue chain is Protein PATRONUS 1 (193 aa).

The short motif at 14-16 is the DEN-box element; the sequence is DEN. The short motif at 46-49 is the D-box element; sequence RKAL.

As to quaternary structure, interacts directly with the anaphase promoting complex/cyclosome (APC/C) through the CDC27B and CDC20-1 subunits. Expressed in somatic and reproductive tissues. Expressed in inflorescence, young buds, roots and basal portion of young leaves. Expressed in proliferating cells such as apical meristems of roots and shoots, expanding cotyledons and leaves, root vascular tissues, and in stomatal precursor cells.

It is found in the nucleus. It localises to the cytoplasm. In terms of biological role, required for the maintenance of centromeric cohesion during interkinesis, until meiosis II. Required for regular configuration and segregation of sister chromatids in meiosis II. Also required for centromere cohesion during meiosis I. Involved in spindle organization at the end of telophase I and in meiosis II. Required to prevent precocious release of pericentromeric cohesins during meiosis, but not for cohesion establishment and monopolar orientation of kinetochores at meiosis I. Involved also in somatic development. Regulates mitotic cell division and ploidy stability in somatic cell types. May be involved in the organization of microtubules dynamics. Involved in abiotic stresses and mono- or divalent ions tolerance and may play a role in maintaining meristematic activity under saline conditions. PANS1 and GIG1 are part of a network linking centromere cohesion and cell cycle progression through control of APC/C activity. Regulates the number of dividing cells in root meristem and is necessary for the anaphase onset control through an APC/C-mediated pathway. Involved in maintaining correct chromosome arm cohesion under stress conditions. In Arabidopsis thaliana (Mouse-ear cress), this protein is Protein PATRONUS 1.